The primary structure comprises 503 residues: Cytochrome P450 3A14 (503 aa).

Cys-442 provides a ligand contact to heme.

Belongs to the cytochrome P450 family. Requires heme as cofactor.

The protein localises to the endoplasmic reticulum membrane. The protein resides in the microsome membrane. It catalyses the reaction an organic molecule + reduced [NADPH--hemoprotein reductase] + O2 = an alcohol + oxidized [NADPH--hemoprotein reductase] + H2O + H(+). In terms of biological role, cytochromes P450 are a group of heme-thiolate monooxygenases. In liver microsomes, this enzyme is involved in an NADPH-dependent electron transport pathway. It oxidizes a variety of structurally unrelated compounds, including steroids, fatty acids, and xenobiotics. This is Cytochrome P450 3A14 (CYP3A14) from Cavia porcellus (Guinea pig).